The chain runs to 455 residues: Serine--tRNA ligase (455 aa).

L-serine is bound at residue 252-254 (TAE). ATP-binding positions include 283–285 (RKE) and Val-299. Glu-306 is a binding site for L-serine. 370–373 (EVVS) contacts ATP. An L-serine-binding site is contributed by Thr-406.

This sequence belongs to the class-II aminoacyl-tRNA synthetase family. Type-1 seryl-tRNA synthetase subfamily. As to quaternary structure, homodimer. The tRNA molecule binds across the dimer.

The protein localises to the cytoplasm. It carries out the reaction tRNA(Ser) + L-serine + ATP = L-seryl-tRNA(Ser) + AMP + diphosphate + H(+). The enzyme catalyses tRNA(Sec) + L-serine + ATP = L-seryl-tRNA(Sec) + AMP + diphosphate + H(+). Its pathway is aminoacyl-tRNA biosynthesis; selenocysteinyl-tRNA(Sec) biosynthesis; L-seryl-tRNA(Sec) from L-serine and tRNA(Sec): step 1/1. Catalyzes the attachment of serine to tRNA(Ser). Is also able to aminoacylate tRNA(Sec) with serine, to form the misacylated tRNA L-seryl-tRNA(Sec), which will be further converted into selenocysteinyl-tRNA(Sec). The polypeptide is Serine--tRNA ligase (Pyrococcus horikoshii (strain ATCC 700860 / DSM 12428 / JCM 9974 / NBRC 100139 / OT-3)).